The following is a 1473-amino-acid chain: Sulfite reductase [NADPH] subunit beta (1473 aa).

Positions 728–876 (LTILFASDGG…AYNLWEPELW (149 aa)) constitute a Flavodoxin-like domain. The [4Fe-4S] cluster site is built by cysteine 1328, cysteine 1334, cysteine 1373, and cysteine 1377. Position 1377 (cysteine 1377) interacts with siroheme.

It belongs to the nitrite and sulfite reductase 4Fe-4S domain family. Alpha(2)-beta(2). The alpha component is a flavoprotein, the beta component is a hemoprotein. Requires siroheme as cofactor. It depends on [4Fe-4S] cluster as a cofactor.

The protein resides in the cytoplasm. It catalyses the reaction hydrogen sulfide + 3 NADP(+) + 3 H2O = sulfite + 3 NADPH + 4 H(+). It functions in the pathway sulfur metabolism; hydrogen sulfide biosynthesis; hydrogen sulfide from sulfite (NADPH route): step 1/1. Functionally, catalyzes the reduction of sulfite to sulfide, one of several activities required for the biosynthesis of L-cysteine from sulfate. This Schizosaccharomyces pombe (strain 972 / ATCC 24843) (Fission yeast) protein is Sulfite reductase [NADPH] subunit beta (sir1).